A 556-amino-acid chain; its full sequence is MFDAIDAALADIKAGKAVVVVDDENRENEGDLICAAQFATPALVNFMAVEARGLICLAMTGDRLDELDLPLMVSKNTDSNQTAFTVSIDAAPHLGVTTGISAEDRARTIQIAINPVTRPEDLSRPGHIFPLRAKTGGVLKRAGHTEAAVDLSRLAGLYPAGVICEIQNADGSMARLPELVEYARKYDLKLISIADLISYRLQHDRFVQRETICEFPSQFGEFKLYAYRNLLDQTEHIAIVKGDPSEFGQQPVMVRMHSECLTGDALGSLRCDCRMQLQAALKMLENHGLGVVVYLRQEGRGIGLVNKLKAYSLQDLGYDTVEANERLGFPADLRDYGMGAQMLNDLGVKQIRLITNNPRKIAGLKGYGLEIVERVPLLIEANDYNSHYLTTKAEKLGHWLVKNYLLAIAIKFTPNVASAQQRYEKLEKIRALLQGTPLMVHEDNRPVAIALFGKNSLIFHVGLDQNLPSGQPWQKHDHSPYPALVKDFLVQLKQWPDLQALAFLIAQGKDPMETLQVSLDRENVSFADLTADALNQWQPQTVYTYSKQGSGEMTNR.

The tract at residues 1–202 (MFDAIDAALA…IADLISYRLQ (202 aa)) is DHBP synthase. D-ribulose 5-phosphate-binding positions include 26-27 (RE), D31, 141-145 (RAGHT), and E165. E27 is a binding site for Mg(2+). Mg(2+) is bound at residue H144. Residues 203 to 402 (HDRFVQRETI…AEKLGHWLVK (200 aa)) are GTP cyclohydrolase II. Position 255–259 (255–259 (RMHSE)) interacts with GTP. Residues C260, C271, and C273 each contribute to the Zn(2+) site. GTP contacts are provided by residues Q276, 298–300 (EGR), and T320. D332 acts as the Proton acceptor; for GTP cyclohydrolase activity in catalysis. The active-site Nucleophile; for GTP cyclohydrolase activity is the R334. Residues T355 and K360 each contribute to the GTP site. The segment at 403–556 (NYLLAIAIKF…KQGSGEMTNR (154 aa)) is unknown.

It in the N-terminal section; belongs to the DHBP synthase family. In the central section; belongs to the GTP cyclohydrolase II family. Mg(2+) is required as a cofactor. It depends on Mn(2+) as a cofactor. The cofactor is Zn(2+).

The enzyme catalyses D-ribulose 5-phosphate = (2S)-2-hydroxy-3-oxobutyl phosphate + formate + H(+). It catalyses the reaction GTP + 4 H2O = 2,5-diamino-6-hydroxy-4-(5-phosphoribosylamino)-pyrimidine + formate + 2 phosphate + 3 H(+). It functions in the pathway cofactor biosynthesis; riboflavin biosynthesis; 2-hydroxy-3-oxobutyl phosphate from D-ribulose 5-phosphate: step 1/1. The protein operates within cofactor biosynthesis; riboflavin biosynthesis; 5-amino-6-(D-ribitylamino)uracil from GTP: step 1/4. Functionally, catalyzes the conversion of D-ribulose 5-phosphate to formate and 3,4-dihydroxy-2-butanone 4-phosphate. Its function is as follows. Catalyzes the conversion of GTP to 2,5-diamino-6-ribosylamino-4(3H)-pyrimidinone 5'-phosphate (DARP), formate and pyrophosphate. The polypeptide is Riboflavin biosynthesis protein RibBA (ribBA) (Synechocystis sp. (strain ATCC 27184 / PCC 6803 / Kazusa)).